A 387-amino-acid polypeptide reads, in one-letter code: Exodeoxyribonuclease 7 large subunit (387 aa).

This sequence belongs to the XseA family. Heterooligomer composed of large and small subunits.

Its subcellular location is the cytoplasm. The catalysed reaction is Exonucleolytic cleavage in either 5'- to 3'- or 3'- to 5'-direction to yield nucleoside 5'-phosphates.. Bidirectionally degrades single-stranded DNA into large acid-insoluble oligonucleotides, which are then degraded further into small acid-soluble oligonucleotides. This chain is Exodeoxyribonuclease 7 large subunit, found in Campylobacter fetus subsp. fetus (strain 82-40).